A 145-amino-acid chain; its full sequence is Endoribonuclease YbeY (145 aa).

H109, H113, and H119 together coordinate Zn(2+).

Belongs to the endoribonuclease YbeY family. Zn(2+) serves as cofactor.

Its subcellular location is the cytoplasm. Functionally, single strand-specific metallo-endoribonuclease involved in late-stage 70S ribosome quality control and in maturation of the 3' terminus of the 16S rRNA. This is Endoribonuclease YbeY from Ruthia magnifica subsp. Calyptogena magnifica.